The primary structure comprises 598 residues: EF-hand and coiled-coil domain-containing protein 1 (598 aa).

The segment at 1 to 22 (MEPVSTGAEAGMEGAGGDPYRR) is disordered. Residues 54-89 (GLDQYLQEVFHHLDCRGAGRLPRADFRALCAVLGLR) enclose the EF-hand domain. Disordered stretches follow at residues 96 to 127 (AGQAAGDGNSRDVTPGDAAAELATDGDSDTDE), 175 to 198 (RLRRPRRRRRPPCAPGPDSGPDCE), and 326 to 411 (YRSE…KKTP). Positions 175–185 (RLRRPRRRRRP) are enriched in basic residues. A coiled-coil region spans residues 196 to 303 (DCERVARLEE…RSLHRVRELE (108 aa)). Residues 343-359 (PGDKSNEPEDAGTRDPD) show a composition bias toward basic and acidic residues. The segment covering 394-404 (SDEEEVEEERW) has biased composition (acidic residues). Residues 479–533 (TSEEEAELQQKVEENEHLRLELQMVETERVRLSLLEEKLVDVLQLLQRLRDLNIS) adopt a coiled-coil conformation.

In Homo sapiens (Human), this protein is EF-hand and coiled-coil domain-containing protein 1 (EFCC1).